The sequence spans 293 residues: Ribosomal RNA small subunit methyltransferase A (293 aa).

S-adenosyl-L-methionine contacts are provided by N38, V40, G65, E86, D116, and N135.

This sequence belongs to the class I-like SAM-binding methyltransferase superfamily. rRNA adenine N(6)-methyltransferase family. RsmA subfamily.

Its subcellular location is the cytoplasm. It carries out the reaction adenosine(1518)/adenosine(1519) in 16S rRNA + 4 S-adenosyl-L-methionine = N(6)-dimethyladenosine(1518)/N(6)-dimethyladenosine(1519) in 16S rRNA + 4 S-adenosyl-L-homocysteine + 4 H(+). Functionally, specifically dimethylates two adjacent adenosines (A1518 and A1519) in the loop of a conserved hairpin near the 3'-end of 16S rRNA in the 30S particle. May play a critical role in biogenesis of 30S subunits. The protein is Ribosomal RNA small subunit methyltransferase A of Nocardia farcinica (strain IFM 10152).